A 145-amino-acid chain; its full sequence is U20-hexatoxin-Hi1a (145 aa).

Positions 1 to 16 (MYQFLIIVILAAFVNG) are cleaved as a signal peptide. Thyroglobulin type-1 domains lie at 20-73 (KTEC…GQPM) and 82-145 (ACEC…RLEC). 5 disulfide bridges follow: cysteine 23–cysteine 45, cysteine 56–cysteine 63, cysteine 85–cysteine 106, cysteine 117–cysteine 124, and cysteine 126–cysteine 145.

In terms of tissue distribution, expressed by the venom gland.

It localises to the secreted. Functionally, cysteine proteinase inhibitor. The chain is U20-hexatoxin-Hi1a from Hadronyche infensa (Fraser island funnel-web spider).